A 119-amino-acid polypeptide reads, in one-letter code: 5-hydroxyisourate hydrolase (119 aa).

Positions 10, 48, and 116 each coordinate substrate.

The protein belongs to the transthyretin family. 5-hydroxyisourate hydrolase subfamily. As to quaternary structure, homotetramer.

The catalysed reaction is 5-hydroxyisourate + H2O = 5-hydroxy-2-oxo-4-ureido-2,5-dihydro-1H-imidazole-5-carboxylate + H(+). Its pathway is purine metabolism; urate degradation; (S)-allantoin from urate: step 2/3. Its function is as follows. Catalyzes the hydrolysis of 5-hydroxyisourate (HIU) to 2-oxo-4-hydroxy-4-carboxy-5-ureidoimidazoline (OHCU). The sequence is that of 5-hydroxyisourate hydrolase from Deinococcus radiodurans (strain ATCC 13939 / DSM 20539 / JCM 16871 / CCUG 27074 / LMG 4051 / NBRC 15346 / NCIMB 9279 / VKM B-1422 / R1).